The primary structure comprises 454 residues: Protein odr-4 homolog (454 aa).

2 helical membrane passes run 82-102 (MLPGGLLVLGVFIITTLELAN) and 432-452 (IGVIAAFTVAVLAAGISFHYF).

It belongs to the ODR-4 family. In terms of tissue distribution, ubiquitously expressed.

The protein resides in the membrane. Its function is as follows. May play a role in the trafficking of a subset of G-protein coupled receptors. This Homo sapiens (Human) protein is Protein odr-4 homolog.